A 443-amino-acid chain; its full sequence is Structure-specific endonuclease subunit SLX1 (443 aa).

The GIY-YIG domain maps to 13–93 (RVYVCYCLRS…QKPHASRHLR (81 aa)). The tract at residues 121-140 (FPATRSSAPSSAASHDSGLN) is disordered. An SLX1-type zinc finger spans residues 361-419 (CGLCGGHINRHVPLSYTHCPHACDAVFHLTCLARYSLEQETRAHARTFCLPTSAWCPMC).

This sequence belongs to the SLX1 family. Forms a heterodimer with SLX4. It depends on a divalent metal cation as a cofactor.

The protein localises to the nucleus. Its function is as follows. Catalytic subunit of the SLX1-SLX4 structure-specific endonuclease that resolves DNA secondary structures generated during DNA repair and recombination. Has endonuclease activity towards branched DNA substrates, introducing single-strand cuts in duplex DNA close to junctions with ss-DNA. This chain is Structure-specific endonuclease subunit SLX1, found in Malassezia globosa (strain ATCC MYA-4612 / CBS 7966) (Dandruff-associated fungus).